A 343-amino-acid chain; its full sequence is Probable F-box protein At1g67455 (343 aa).

The F-box domain maps to 1 to 46 (MMISDLPEDMVEEILSRVSIISLGALRWNDLSKARVICKAEARQQF).

In Arabidopsis thaliana (Mouse-ear cress), this protein is Probable F-box protein At1g67455.